A 199-amino-acid chain; its full sequence is 5'-deoxynucleotidase YfbR (199 aa).

Residues 18–19 (RW) and histidine 33 each bind substrate. Positions 30–142 (VSEHSLQVAM…VKQADALCAY (113 aa)) constitute an HD domain. Positions 33, 68, and 69 each coordinate a divalent metal cation. Substrate contacts are provided by residues aspartate 69, 77–80 (DLPT), and aspartate 137. Aspartate 137 is a binding site for a divalent metal cation.

Belongs to the 5DNU family. In terms of assembly, homodimer. Requires a divalent metal cation as cofactor.

Its subcellular location is the cytoplasm. It catalyses the reaction a 2'-deoxyribonucleoside 5'-phosphate + H2O = a 2'-deoxyribonucleoside + phosphate. Functionally, catalyzes the strictly specific dephosphorylation of 2'-deoxyribonucleoside 5'-monophosphates. The sequence is that of 5'-deoxynucleotidase YfbR from Shigella dysenteriae serotype 1 (strain Sd197).